The chain runs to 351 residues: Ribosomal RNA small subunit methyltransferase H (351 aa).

S-adenosyl-L-methionine-binding positions include 48 to 50 (GGY), D67, F94, D115, and Q122. The tract at residues 298 to 351 (GPVLPSEAETEVNPRARSAKLRAGERTDGPAPPPLSAIETLASLPAPQGRGTRR) is disordered.

It belongs to the methyltransferase superfamily. RsmH family.

The protein resides in the cytoplasm. It catalyses the reaction cytidine(1402) in 16S rRNA + S-adenosyl-L-methionine = N(4)-methylcytidine(1402) in 16S rRNA + S-adenosyl-L-homocysteine + H(+). Functionally, specifically methylates the N4 position of cytidine in position 1402 (C1402) of 16S rRNA. This is Ribosomal RNA small subunit methyltransferase H from Methylorubrum populi (strain ATCC BAA-705 / NCIMB 13946 / BJ001) (Methylobacterium populi).